A 434-amino-acid chain; its full sequence is MEISSHQSYLLQQLNEQRRQDVFCDCSILVEGKVFKAHRNVLFASSGYFKMLLSQNSRETSQPTTATFQTFSPDTFTVILDFVYSGKLSLTGQNVIEVMSAASFLQMTDVISVCKTFIKSSLDISEKEKDRYFSLSDKDTGSNGVERPPFYSSSWQEEGGSPHSHVSPDPGKPWNKYGYPPASQRSPQRPLAKHEQRKEPSKKAKHVRLPQPSEVVHFKPGKGEAQTDSGNHVSQSEEQVPVDAEVDPAPAGFQYSQGPDGIARSFPDDLTRLRFKCPFCTHVVKRKADLKRHLRCHTGERPYPCQACGKRFSRLDHLSSHFRTIHQACKLICRKCKRHVTDLTGQVVQEGTRRYRLCNECLADVGMESLPADLEAEQHRTAPADGDKDCRWHLSEEENRSYVEIVEDGSADLVIQQVDDSEEEEEKEIKPNIR.

Residues 24–92 enclose the BTB domain; it reads CDCSILVEGK…VYSGKLSLTG (69 aa). The interval 134–238 is disordered; it reads SLSDKDTGSN…SGNHVSQSEE (105 aa). Phosphoserine occurs at positions 161 and 167. Glycyl lysine isopeptide (Lys-Gly) (interchain with G-Cter in SUMO2) cross-links involve residues lysine 172, lysine 176, and lysine 193. The span at 192–202 shows a compositional bias: basic and acidic residues; sequence AKHEQRKEPSK. Residues 226–238 are compositionally biased toward polar residues; sequence QTDSGNHVSQSEE. 2 C2H2-type zinc fingers span residues 275-297 and 303-326; these read FKCP…LRCH and YPCQ…RTIH. Lysine 430 participates in a covalent cross-link: Glycyl lysine isopeptide (Lys-Gly) (interchain with G-Cter in SUMO2).

It localises to the nucleus. Its function is as follows. May be involved in transcriptional regulation. The sequence is that of Zinc finger and BTB domain-containing protein 8A (Zbtb8a) from Mus musculus (Mouse).